The primary structure comprises 251 residues: Keratin-associated protein 10-10 (251 aa).

15 tandem repeats follow at residues 26–30 (CCEPC), 31–35 (CCAPA), 52–56 (CCQTA), 84–88 (CCTSS), 94–98 (CCVPV), 99–103 (CCVPV), 104–109 (CCVPVC), 126–130 (CCQQS), 136–140 (CCTSS), 146–150 (CCVPV), 168–172 (CCQQS), 178–182 (CCTAS), 183–187 (CCRPS), 202–206 (CCVPV), and 220–224 (CCRTA). The 15 X 5 AA repeats of C-C-X(3) stretch occupies residues 26–224 (CCEPCCCAPA…SCQPSCCRTA (199 aa)).

Belongs to the KRTAP type 10 family. In terms of assembly, interacts with hair keratins. Restricted to a narrow region of the hair fiber cuticle, lying approximately 20 cell layers above the apex of the dermal papilla of the hair root; not detected in any other tissues.

In terms of biological role, in the hair cortex, hair keratin intermediate filaments are embedded in an interfilamentous matrix, consisting of hair keratin-associated proteins (KRTAP), which are essential for the formation of a rigid and resistant hair shaft through their extensive disulfide bond cross-linking with abundant cysteine residues of hair keratins. The matrix proteins include the high-sulfur and high-glycine-tyrosine keratins. This Homo sapiens (Human) protein is Keratin-associated protein 10-10 (KRTAP10-10).